Here is a 32-residue protein sequence, read N- to C-terminus: Calcitonin (32 aa).

A disulfide bond links cysteine 1 and cysteine 7. Residue proline 32 is modified to Proline amide.

It belongs to the calcitonin family.

The protein localises to the secreted. Causes a rapid but short-lived drop in the level of calcium and phosphate in blood by promoting the incorporation of those ions in the bones. This chain is Calcitonin, found in Aquarana catesbeiana (American bullfrog).